Here is a 248-residue protein sequence, read N- to C-terminus: MGIQNRVALITGSASGMGKQTALRFAEQGAAVVINDIDAEKVRATVDEFSARGHRVLGAVADIGNKAAVDGMVKQTIDAFGRIDILVNNAGMERAGALRKLSEADWDVTINVNLKGTFLCTQAVHGHMVENKHGRIVNIASRAWLGGAGQTPYSSAKAGVVGMTRALAIELGRAGITVNCVAPGLIHTPMWDELPEKDQQFLLSRQPTGKLGEPDDIANTLLFLADDDSGFVTGQVLYVCGGRSLFAG.

Residues serine 15, aspartate 36, aspartate 62, isoleucine 63, asparagine 89, tyrosine 153, and lysine 157 each coordinate NAD(+). The active-site Proton acceptor is the tyrosine 153.

Belongs to the short-chain dehydrogenases/reductases (SDR) family. As to quaternary structure, heterotetramer composed of 2 inactive BbsC subunits and 2 active BbsD subunits.

The enzyme catalyses (2S)-[(R)-hydroxy(phenyl)methyl]succinyl-CoA + NAD(+) = (S)-2-benzoylsuccinyl-CoA + NADH + H(+). Its pathway is xenobiotic degradation; toluene degradation. With respect to regulation, activity is probably regulated by the inactive BbsC subunit. In terms of biological role, involved in an anaerobic toluene degradation pathway. Active subunit that catalyzes the oxidation of 2-(alpha-hydroxybenzyl)succinyl-CoA to 2-benzoylsuccinyl-CoA. In vitro, can catalyze the NADH-dependent reduction of the artificial substrates 2,2-dichloroacetophene and 2,4'-dichloroacetophenone. In Thauera aromatica, this protein is (2S)-[(R)-hydroxy(phenyl)methyl]succinyl-CoA dehydrogenase subunit BbsD.